A 71-amino-acid polypeptide reads, in one-letter code: MRCVPVFIILLLLASPAASDPLEKRIQSDLIRAALEDADTKNDPRILEDIVSTALATCCKFQFLNFCCNEK.

Positions 1-19 (MRCVPVFIILLLLASPAAS) are cleaved as a signal peptide. A propeptide spanning residues 20–56 (DPLEKRIQSDLIRAALEDADTKNDPRILEDIVSTALA) is cleaved from the precursor.

Belongs to the conotoxin T superfamily. In terms of processing, contains 2 disulfide bonds that can be either 'C1-C3, C2-C4' or 'C1-C4, C2-C3', since these disulfide connectivities have been observed for conotoxins with cysteine framework V (for examples, see AC P0DQQ7 and AC P81755). In terms of tissue distribution, expressed by the venom duct.

The protein resides in the secreted. This Conus caracteristicus (Characteristic cone) protein is Conotoxin Ca5.1.